A 278-amino-acid chain; its full sequence is HTH-type transcriptional activator RhaS (278 aa).

Residues 174–272 (NLLLAWLEDH…NWSPRDIRQG (99 aa)) form the HTH araC/xylS-type domain. 2 consecutive DNA-binding regions (H-T-H motif) follow at residues 191 to 212 (DAVA…KQQT) and 239 to 262 (VTDI…RREF).

In terms of assembly, binds DNA as a dimer.

The protein resides in the cytoplasm. Its function is as follows. Activates expression of the rhaBAD and rhaT operons. This chain is HTH-type transcriptional activator RhaS, found in Escherichia coli (strain SE11).